We begin with the raw amino-acid sequence, 1331 residues long: Retrotransposon-like protein 1 (1331 aa).

Disordered regions lie at residues 1 to 123, 128 to 147, 556 to 595, and 971 to 1033; these read MMEP…SQED, TDLAESEEDESPEEPDSSTV, EADEETSDQPSSDGSDDLSESEPSELQQAGDSDQSEETFY, and PSSE…DEPN. Low complexity predominate over residues 19 to 30; the sequence is SSKQMESSEGSS. 3 stretches are compositionally biased toward acidic residues: residues 109 to 123, 128 to 143, and 569 to 578; these read EMEEEEDNPWESQED, TDLAESEEDESPEEPD, and GSDDLSESEP. A compositionally biased stretch (low complexity) spans 992 to 1001; that stretch reads RRVATTTRPT. Over residues 1015–1024 the composition is skewed to acidic residues; the sequence is PESEDEEESE. A run of 2 helical transmembrane segments spans residues 1070–1090 and 1117–1137; these read FYRSLLFWKNLLAMAALLVML and LFLDASLLTSSGIATAVTQLF. The segment at 1309–1331 is disordered; it reads SPPREGATLEELPSDADEDAGLD. Residues 1320–1331 show a composition bias toward acidic residues; the sequence is LPSDADEDAGLD.

It is found in the membrane. Functionally, plays an essential role in capillaries endothelial cells for the maintenance of feto-maternal interface and for development of the placenta. The sequence is that of Retrotransposon-like protein 1 (RTL1) from Bos taurus (Bovine).